Reading from the N-terminus, the 363-residue chain is 3-isopropylmalate dehydrogenase (363 aa).

78–91 (GPKWENLPPESQPE) provides a ligand contact to NAD(+). Positions 99, 109, 138, and 227 each coordinate substrate. The Mg(2+) site is built by D227, D251, and D255. 285-297 (GSAPDIAGKNIAN) serves as a coordination point for NAD(+).

This sequence belongs to the isocitrate and isopropylmalate dehydrogenases family. LeuB type 1 subfamily. As to quaternary structure, homodimer. Mg(2+) is required as a cofactor. It depends on Mn(2+) as a cofactor.

Its subcellular location is the cytoplasm. It catalyses the reaction (2R,3S)-3-isopropylmalate + NAD(+) = 4-methyl-2-oxopentanoate + CO2 + NADH. It participates in amino-acid biosynthesis; L-leucine biosynthesis; L-leucine from 3-methyl-2-oxobutanoate: step 3/4. Catalyzes the oxidation of 3-carboxy-2-hydroxy-4-methylpentanoate (3-isopropylmalate) to 3-carboxy-4-methyl-2-oxopentanoate. The product decarboxylates to 4-methyl-2 oxopentanoate. This is 3-isopropylmalate dehydrogenase from Salmonella paratyphi A (strain ATCC 9150 / SARB42).